The primary structure comprises 425 residues: MKKVILAYSGGLDTSVILKWLSEKGFEVIAFVANLGQKEDFKAIECKALSTGASKVYVEDLRREFVTEFVFPALMGNALYEGRYLLGTALSRPLIAKKQVEIAEKENAAFVAHGATGKGNDQVRFELTYAALNPFLKVLSPWKDIEFLKLFKGRTDLLAYAKQKCILTRATIEKPYSEDENLMHISHEGGKLEDPLYIAGEDVFSWTNSPKNAPDEEVFLELHFRSGLPVKVVNLNDGSTKEDPLELFEYLNRIGSKYGVGRVDMVENRFIGIKSRGIYETPGATILWIAHRDLEGIAMDKEVMHLRDMLSVKFSELIYNGFWFSPEMDFLLSAFRKSQEGIEGKVNLIIYKGNVVPVSRFSPTSLYDQSLSSMDVDGGFDATDSKGFINIHALRLRAHNLVLRSRDPFGWRRGIIDAEIMGKGV.

Residues A7 to S15 and A33 contribute to the ATP site. An L-citrulline-binding site is contributed by Y84. G114 lines the ATP pocket. T116, N120, and D121 together coordinate L-aspartate. Residue N120 coordinates L-citrulline. L-citrulline is bound by residues R124, S177, S186, E267, and Y279.

This sequence belongs to the argininosuccinate synthase family. Type 1 subfamily. As to quaternary structure, homotetramer.

It localises to the cytoplasm. It catalyses the reaction L-citrulline + L-aspartate + ATP = 2-(N(omega)-L-arginino)succinate + AMP + diphosphate + H(+). It participates in amino-acid biosynthesis; L-arginine biosynthesis; L-arginine from L-ornithine and carbamoyl phosphate: step 2/3. This chain is Argininosuccinate synthase, found in Pseudothermotoga lettingae (strain ATCC BAA-301 / DSM 14385 / NBRC 107922 / TMO) (Thermotoga lettingae).